The following is a 321-amino-acid chain: Replication factor C small subunit (321 aa).

46 to 53 (GPAGVGKT) lines the ATP pocket.

This sequence belongs to the activator 1 small subunits family. RfcS subfamily. Heterohexamer composed of four small subunits (RfcS) and two large subunits (RfcL).

Part of the RFC clamp loader complex which loads the PCNA sliding clamp onto DNA. The complex possesses DNA-dependent ATPase activity which is further stimulated by PCNA. In conjunction with PCNA stimulates DNA synthesis by PolB, relieving inhibition by replication protein A (RPA). This Methanothermobacter thermautotrophicus (strain ATCC 29096 / DSM 1053 / JCM 10044 / NBRC 100330 / Delta H) (Methanobacterium thermoautotrophicum) protein is Replication factor C small subunit (rfcS).